The chain runs to 403 residues: Zinc finger HIT domain-containing protein 2 (403 aa).

M1 bears the N-acetylmethionine mark. Positions 7, 10, 22, 25, 30, 34, 38, and 41 each coordinate Zn(2+). An HIT-type zinc finger spans residues 7 to 41; sequence CGFCPAGEVQPARYTCPRCNAPYCSLRCYRTHGTC. Residues 72–98 form a disordered region; the sequence is RQQRETEDEPGEAGLSSGPAPGGLSGL. T161 is modified (phosphothreonine).

Interacts (via HIT-type zinc finger) with RUVBL2 in the presence of ATP or ADP; shows a stronger interaction in the presence of ADP. In terms of tissue distribution, low expression in most tissues; highly expressed in testis.

May act as a bridging factor mediating the interaction between the R2TP/Prefoldin-like (R2TP/PFDL) complex and U5 small nuclear ribonucleoprotein (U5 snRNP). Required for the interaction of R2TP complex subunit RPAP3 and prefoldin-like subunit URI1 with U5 snRNP proteins EFTUD2 and PRPF8. May play a role in regulating the composition of the U5 snRNP complex. This is Zinc finger HIT domain-containing protein 2 (ZNHIT2) from Homo sapiens (Human).